The sequence spans 699 residues: Elongation factor G 1 (699 aa).

One can recognise a tr-type G domain in the interval 8 to 290; sequence EHYRNIGICA…AVIEFLPSPS (283 aa). GTP is bound by residues 17–24, 88–92, and 142–145; these read AHVDAGKT, DTPGH, and NKMD.

Belongs to the TRAFAC class translation factor GTPase superfamily. Classic translation factor GTPase family. EF-G/EF-2 subfamily.

Its subcellular location is the cytoplasm. In terms of biological role, catalyzes the GTP-dependent ribosomal translocation step during translation elongation. During this step, the ribosome changes from the pre-translocational (PRE) to the post-translocational (POST) state as the newly formed A-site-bound peptidyl-tRNA and P-site-bound deacylated tRNA move to the P and E sites, respectively. Catalyzes the coordinated movement of the two tRNA molecules, the mRNA and conformational changes in the ribosome. The sequence is that of Elongation factor G 1 from Vibrio parahaemolyticus serotype O3:K6 (strain RIMD 2210633).